Reading from the N-terminus, the 973-residue chain is Splicing regulator ARVCF (973 aa).

Positions 95-123 (VTVEEDPGTPTSHVSIVTSEDGTTRRTET) are disordered. Threonine 103 and threonine 105 each carry phosphothreonine. Polar residues predominate over residues 103-115 (TPTSHVSIVTSED). Arginine 171 carries the omega-N-methylarginine modification. Disordered stretches follow at residues 233–254 (RREA…LPEH) and 267–331 (RSLA…QPER). Residue serine 268 is modified to Phosphoserine. The segment covering 271-281 (ADDEGGPDLEP) has biased composition (acidic residues). Residues 289 to 303 (RRPEYGRGLRARALE) are compositionally biased toward basic and acidic residues. Phosphoserine occurs at positions 333, 336, 344, and 346. ARM repeat units lie at residues 349–388 (STRK…HLCF), 391–430 (EGIK…NLSY), 434–468 (ADNK…VTGT), 469–509 (LWNL…NEDS), 527–566 (LRNV…DTDN), and 576–623 (MRNL…GKKA). The disordered stretch occupies residues 593–623 (YQEVEPGIPGSAATSQRRRKDDASCFGGKKA). Phosphoserine is present on serine 607. The Nuclear localization signal signature appears at 608–624 (QRRRKDDASCFGGKKAK). The residue at position 637 (threonine 637) is a Phosphothreonine. ARM repeat units follow at residues 641 to 681 (PKRT…AAGA), 694 to 733 (TYIR…NLSL), 734 to 776 (DQRN…AVLN), and 777 to 821 (TIHE…SHVL). Residues 771 to 955 (VVAVLNTIHE…VLGPGAPPFC (185 aa)) form a required for interaction with RNA-binding proteins DDX5, HNRNPH2 and SRSF1 and with mRNAs region. The disordered stretch occupies residues 844–926 (FQSASTAKGP…KELLKGPGPA (83 aa)). Residue serine 865 is modified to Phosphoserine. The residue at position 866 (threonine 866) is a Phosphothreonine. The span at 872 to 881 (KNLDGEKSTT) shows a compositional bias: basic and acidic residues.

It belongs to the beta-catenin family. As to quaternary structure, component of a ribonucleoprotein complex containing mRNAs and RNA-binding proteins including DDX5, HNRNPH2 and SRSF1 as well as ARVCF. Interacts (via the extreme C-terminus) with FRMPD2 (via the PDZ 2 domain). Interacts with CCDC85B. As to expression, expressed in optic nerve sheath envelope (at protein level). Expressed in heart (at protein level).

The protein localises to the cell junction. It is found in the adherens junction. The protein resides in the nucleus. It localises to the cytoplasm. Its function is as follows. Contributes to the regulation of alternative splicing of pre-mRNAs. In Rattus norvegicus (Rat), this protein is Splicing regulator ARVCF.